A 312-amino-acid polypeptide reads, in one-letter code: MNHIFKHIPVMKKELIDSLKIKKNGIYIDSTFGTGGHSNEILKKLGQNGRLYSIDRDPIAFSIGSEIKDSRFHIINENFSKLLDFAKNEKIIGKVNGIIFDLGVSSIQIDDYRRGFSFKNDGPLDMRMNPNYGISASEWLFESNVKEISFVLKNFGEERFSRKIAYAIKRRSQIKKITSTLELANIIKKTIPTKNKFKHPARRSFQAIRIYINQELEEIQKALESTLKILKPGGRISIISFHSLEDRLVKKFMIKNSTKAIIPYGMPITEEQLNRLTTCKLKIINRILPTQNEINNNPRARSSVLRIAEIQE.

S-adenosyl-L-methionine is bound by residues 35 to 37, Asp55, Phe79, Asp101, and Gln108; that span reads GGH.

Belongs to the methyltransferase superfamily. RsmH family.

The protein resides in the cytoplasm. The enzyme catalyses cytidine(1402) in 16S rRNA + S-adenosyl-L-methionine = N(4)-methylcytidine(1402) in 16S rRNA + S-adenosyl-L-homocysteine + H(+). Functionally, specifically methylates the N4 position of cytidine in position 1402 (C1402) of 16S rRNA. The chain is Ribosomal RNA small subunit methyltransferase H from Buchnera aphidicola subsp. Acyrthosiphon pisum (strain APS) (Acyrthosiphon pisum symbiotic bacterium).